The sequence spans 344 residues: Probable magnesium transporter NIPA9 (344 aa).

At 1–46 (MWESICLTLAATAGNNIGKVLQKKGTIILPPLSLKLKVLRAYAENK) the chain is on the cytoplasmic side. 2 helical membrane-spanning segments follow: residues 47-67 (PWAL…RALS) and 68-88 (LAPV…LSVF). The Cytoplasmic segment spans residues 89–98 (SHFYLKEVMN). A helical membrane pass occupies residues 99–119 (VFDWIGITVAGIGTIGVGAGG). Over 120 to 125 (EEQEAS) the chain is Extracellular. Residues 126–146 (LISVFQLLWLALVVAILFVLL) form a helical membrane-spanning segment. The Cytoplasmic segment spans residues 147–166 (NAWLHIFKRQRREQELGEYE). The helical transmembrane segment at 167–187 (VVEEIIYGLESGILFGMASVV) threads the bilayer. Residues 188–191 (SKMG) are Extracellular-facing. A helical transmembrane segment spans residues 192–212 (FVFVEQGFSTMFIPMCISISI). Topologically, residues 213–231 (CCSGTGFFYQTRGLKHGRA) are cytoplasmic. The chain crosses the membrane as a helical span at residues 232 to 252 (IVVSTCAAVASIVTGVVAGMF). Topologically, residues 253–265 (ALGEKLPTSPSGR) are extracellular. Residues 266-286 (LLLLLGWLLIMLGVVLLVTSS) traverse the membrane as a helical segment. The Cytoplasmic segment spans residues 287-344 (RLIRHLPRSFRRSRQTSLERGFNIRRTTSHTPKDTNPSAVIQAATLHHLLSSPSKDKD).

This sequence belongs to the NIPA (TC 2.A.7) family. In terms of assembly, homodimer.

The protein resides in the cell membrane. The protein localises to the early endosome. In terms of biological role, acts as a Mg(2+) transporter. Can also transport other divalent cations such as Fe(2+), Sr(2+), Ba(2+), Mn(2+) and Co(2+) but to a much less extent than Mg(2+). This is Probable magnesium transporter NIPA9 from Arabidopsis thaliana (Mouse-ear cress).